Here is a 366-residue protein sequence, read N- to C-terminus: Alanine racemase (366 aa).

Lysine 40 acts as the Proton acceptor; specific for D-alanine in catalysis. Residue lysine 40 is modified to N6-(pyridoxal phosphate)lysine. Arginine 136 contacts substrate. The active-site Proton acceptor; specific for L-alanine is the tyrosine 263. Methionine 310 is a substrate binding site.

Belongs to the alanine racemase family. It depends on pyridoxal 5'-phosphate as a cofactor.

It carries out the reaction L-alanine = D-alanine. Its pathway is amino-acid biosynthesis; D-alanine biosynthesis; D-alanine from L-alanine: step 1/1. Catalyzes the interconversion of L-alanine and D-alanine. May also act on other amino acids. This is Alanine racemase (alr) from Streptococcus pyogenes serotype M1.